A 396-amino-acid polypeptide reads, in one-letter code: Putative F-box/kelch-repeat protein At3g17540 (396 aa).

Positions 4-50 constitute an F-box domain; sequence TMVISDLPHEIESEILSRVPTKSLAKLHTTCKRWYALFRDPRFVKKN. Kelch repeat units follow at residues 163 to 209, 253 to 299, and 338 to 386; these read LRYC…GMSL, VLSI…FLAV, and RIYI…KRKG.

The protein is Putative F-box/kelch-repeat protein At3g17540 of Arabidopsis thaliana (Mouse-ear cress).